We begin with the raw amino-acid sequence, 343 residues long: Endoplasmic reticulum-resident calcium binding protein (343 aa).

The first 26 residues, 1–26 (MMKINLYKLLCFICVIFLLHKNVVRS), serve as a signal peptide directing secretion. EF-hand domains are found at residues 59–94 (GAKERIEKLFHLIDKNNDKEITEEELNTWSSFLKNE), 95–130 (IFLKQVQAEMGQIDSDKDGFISLNELNDAFAQNLDA), 135–170 (KHSEGLLKRFQIVDKDKDGKLSINEVGLLIDPMKDE), 172–207 (LKELEINEILEHHDVNKDGKISLDEFKQTRSDESSG), and 210–245 (KDDEMALDDFNFFDANKDGFIDKEEIIKVYFDPAHE). Ca(2+)-binding residues include Asp-72, Asn-74, Asp-76, Glu-78, Glu-83, Asp-108, Asp-110, Asp-112, Glu-119, Asp-148, Asp-150, Asp-152, Lys-154, Glu-159, Asp-185, Asn-187, Asp-189, Lys-191, Glu-196, Asp-223, Asn-225, Asp-227, and Glu-234. Residues 313 to 331 (EDDDMDADNTEDDKDEADD) are compositionally biased toward acidic residues. Residues 313–343 (EDDDMDADNTEDDKDEADDASQQKSPAIDEL) are disordered.

This sequence belongs to the CREC family.

Its subcellular location is the endoplasmic reticulum. Functionally, calcium-binding protein. Required for schizont to ring transition. Required for the breakdown of the parasitophorous vacuole membrane during egress. Required for the proteolytic maturation of apical membrane antigen 1 (AMA-1) during egress. Required for the proteolytic maturation of subtilisin-like protease 1 (SUB1) during egress. Required for the proteolytic maturation of plasmepsin X (PMX) during egress. In Plasmodium falciparum (isolate 3D7), this protein is Endoplasmic reticulum-resident calcium binding protein.